Consider the following 233-residue polypeptide: Ribonuclease 3 (233 aa).

In terms of domain architecture, RNase III spans 8–135 (AQRFLEDKQL…VIGAIYLDQG (128 aa)). Glu-48 lines the Mg(2+) pocket. The active site involves Asp-52. The Mg(2+) site is built by Asp-121 and Glu-124. Residue Glu-124 is part of the active site. Residues 161 to 230 (DYKSKLQELV…AQKVLQDNLV (70 aa)) enclose the DRBM domain.

Belongs to the ribonuclease III family. Homodimer. Mg(2+) serves as cofactor.

The protein resides in the cytoplasm. The enzyme catalyses Endonucleolytic cleavage to 5'-phosphomonoester.. In terms of biological role, digests double-stranded RNA. Involved in the processing of primary rRNA transcript to yield the immediate precursors to the large and small rRNAs (23S and 16S). Processes some mRNAs, and tRNAs when they are encoded in the rRNA operon. Processes pre-crRNA and tracrRNA of type II CRISPR loci if present in the organism. The protein is Ribonuclease 3 of Syntrophomonas wolfei subsp. wolfei (strain DSM 2245B / Goettingen).